A 285-amino-acid chain; its full sequence is Bifunctional protein FolD (285 aa).

NADP(+) is bound by residues 166–168 and Ile232; that span reads GAS.

The protein belongs to the tetrahydrofolate dehydrogenase/cyclohydrolase family. In terms of assembly, homodimer.

It catalyses the reaction (6R)-5,10-methylene-5,6,7,8-tetrahydrofolate + NADP(+) = (6R)-5,10-methenyltetrahydrofolate + NADPH. It carries out the reaction (6R)-5,10-methenyltetrahydrofolate + H2O = (6R)-10-formyltetrahydrofolate + H(+). The protein operates within one-carbon metabolism; tetrahydrofolate interconversion. In terms of biological role, catalyzes the oxidation of 5,10-methylenetetrahydrofolate to 5,10-methenyltetrahydrofolate and then the hydrolysis of 5,10-methenyltetrahydrofolate to 10-formyltetrahydrofolate. This chain is Bifunctional protein FolD, found in Photobacterium profundum (strain SS9).